A 297-amino-acid polypeptide reads, in one-letter code: CASP-like protein 4A2 (297 aa).

A compositionally biased stretch (polar residues) spans 1–20; that stretch reads MKMKRTASSNSEAQSYNESP. Residues 1–135 form a disordered region; sequence MKMKRTASSN…PINGEESTRT (135 aa). At 1-149 the chain is on the cytoplasmic side; sequence MKMKRTASSN…ARGDDLVSLT (149 aa). Positions 69–83 are enriched in pro residues; it reads LPSPIPPPPPQFPPP. A helical membrane pass occupies residues 150–170; the sequence is ALGFRITEVILCVISFSIMAA. Residues 171-191 lie on the Extracellular side of the membrane; it reads DKTQGWSGDSYDRYKEYRYCL. A helical membrane pass occupies residues 192–212; the sequence is AVNVIAFVYSAFEACDAACYI. Residues 213–225 are Cytoplasmic-facing; it reads AKESYMINCGFHD. The chain crosses the membrane as a helical span at residues 226–246; sequence LFVFSMDQLLAYLLMSASSCA. Residues 247–265 lie on the Extracellular side of the membrane; that stretch reads ATRVDDWVSNWGKDEFTQM. Residues 266–286 form a helical membrane-spanning segment; that stretch reads ATASIAVSFLAFGAFAVSALI. The Cytoplasmic segment spans residues 287–297; it reads SSYRLFTHASS.

It belongs to the Casparian strip membrane proteins (CASP) family. As to quaternary structure, homodimer and heterodimers.

The protein resides in the cell membrane. The polypeptide is CASP-like protein 4A2 (Arabidopsis thaliana (Mouse-ear cress)).